The chain runs to 72 residues: Translation initiation factor IF-1 (72 aa).

Residues 1–72 (MAKEEVLEFP…TKGRITYRLK (72 aa)) form the S1-like domain.

The protein belongs to the IF-1 family. Component of the 30S ribosomal translation pre-initiation complex which assembles on the 30S ribosome in the order IF-2 and IF-3, IF-1 and N-formylmethionyl-tRNA(fMet); mRNA recruitment can occur at any time during PIC assembly.

Its subcellular location is the cytoplasm. Functionally, one of the essential components for the initiation of protein synthesis. Stabilizes the binding of IF-2 and IF-3 on the 30S subunit to which N-formylmethionyl-tRNA(fMet) subsequently binds. Helps modulate mRNA selection, yielding the 30S pre-initiation complex (PIC). Upon addition of the 50S ribosomal subunit IF-1, IF-2 and IF-3 are released leaving the mature 70S translation initiation complex. In Brucella suis biovar 1 (strain 1330), this protein is Translation initiation factor IF-1.